We begin with the raw amino-acid sequence, 662 residues long: Retaining alpha-galactosidase (662 aa).

Positions 1 to 19 (MKKLTFLLLCVLCTLSLQA) are cleaved as a signal peptide. Glu174 contacts Ca(2+). The active-site Nucleophile is Asp415. Ca(2+) is bound by residues Glu464 and Glu470. Glu470 (proton donor/acceptor) is an active-site residue.

Belongs to the glycosyl hydrolase 97 family. As to quaternary structure, monomer. Ca(2+) is required as a cofactor.

The catalysed reaction is Hydrolysis of terminal, non-reducing alpha-D-galactose residues in alpha-D-galactosides, including galactose oligosaccharides, galactomannans and galactolipids.. Its activity is regulated as follows. Inhibited by EDTA in vitro. Its function is as follows. Galactosidase that is able to hydrolyze the alpha-1,6 disaccharide melibiose and the synthetic p-nitrophenyl alpha-galactoside substrate (pNP-Gal), with retention of the anomeric configuration. Does not hydrolyze DNP-Glc or pNP-Glc. This is Retaining alpha-galactosidase from Bacteroides thetaiotaomicron (strain ATCC 29148 / DSM 2079 / JCM 5827 / CCUG 10774 / NCTC 10582 / VPI-5482 / E50).